The sequence spans 487 residues: E3 ubiquitin-protein ligase RNF8 (487 aa).

Positions 38 to 92 (VTVGRGFGVTYQLVSKICPLMISRNHCILKQNAEGQWTIKDNKSLNGVWLNRERL) constitute an FHA domain. A required for interaction with PIWIL1 region spans residues 68–72 (QNAEG). Disordered stretches follow at residues 143 to 176 (MMEK…KSKI) and 182 to 201 (EPGQ…QPSE). Ser157 is subject to Phosphoserine. The segment at 405–443 (CIICSEYFVEAVTLNCAHSFCSYCINEWMKRKVECPICR) adopts an RING-type zinc-finger fold.

It belongs to the RNF8 family. As to quaternary structure, homodimer. Forms a E2-E3 ubiquitin ligase complex composed of the RNF8 homodimer and a E2 heterodimer of UBE2N and UBE2V2. Interacts with class III E2s, including UBE2E1, UBE2E2, and UBE2E3 and with UBE2N. Interacts with RXRA. Interacts (via FHA domain) with phosphorylated HERC2 (via C-terminus). Interacts with PIWIL1; leading to sequester RNF8 in the cytoplasm. Interacts with WRAP53/TCAB1. Post-translationally, autoubiquitinated through 'Lys-48' and 'Lys-63' of ubiquitin. 'Lys-63' polyubiquitination is mediated by UBE2N. 'Lys-29'-type polyubiquitination is also observed, but it doesn't require its own functional RING-type zinc finger.

The protein localises to the nucleus. It localises to the cytoplasm. The protein resides in the midbody. Its subcellular location is the chromosome. It is found in the telomere. It carries out the reaction S-ubiquitinyl-[E2 ubiquitin-conjugating enzyme]-L-cysteine + [acceptor protein]-L-lysine = [E2 ubiquitin-conjugating enzyme]-L-cysteine + N(6)-ubiquitinyl-[acceptor protein]-L-lysine.. Its pathway is protein modification; protein ubiquitination. Its function is as follows. E3 ubiquitin-protein ligase that plays a key role in DNA damage signaling via 2 distinct roles: by mediating the 'Lys-63'-linked ubiquitination of histones H2A and H2AX and promoting the recruitment of DNA repair proteins at double-strand breaks (DSBs) sites, and by catalyzing 'Lys-48'-linked ubiquitination to remove target proteins from DNA damage sites. Following DNA DSBs, it is recruited to the sites of damage by ATM-phosphorylated MDC1 and catalyzes the 'Lys-63'-linked ubiquitination of histones H2A and H2AX, thereby promoting the formation of TP53BP1 and BRCA1 ionizing radiation-induced foci (IRIF). Also controls the recruitment of UIMC1-BRCC3 (RAP80-BRCC36) and PAXIP1/PTIP to DNA damage sites. Promotes the recruitment of NBN to DNA damage sites by catalyzing 'Lys-6'-linked ubiquitination of NBN. Also recruited at DNA interstrand cross-links (ICLs) sites and catalyzes 'Lys-63'-linked ubiquitination of histones H2A and H2AX, leading to recruitment of FAAP20 and Fanconi anemia (FA) complex, followed by interstrand cross-link repair. H2A ubiquitination also mediates the ATM-dependent transcriptional silencing at regions flanking DSBs in cis, a mechanism to avoid collision between transcription and repair intermediates. Promotes the formation of 'Lys-63'-linked polyubiquitin chains via interactions with the specific ubiquitin-conjugating UBE2N/UBC13 and ubiquitinates non-histone substrates such as PCNA. Substrates that are polyubiquitinated at 'Lys-63' are usually not targeted for degradation. Also catalyzes the formation of 'Lys-48'-linked polyubiquitin chains via interaction with the ubiquitin-conjugating UBE2L6/UBCH8, leading to degradation of substrate proteins such as CHEK2, JMJD2A/KDM4A and KU80/XRCC5: it is still unclear how the preference toward 'Lys-48'- versus 'Lys-63'-linked ubiquitination is regulated but it could be due to RNF8 ability to interact with specific E2 specific ligases. For instance, interaction with phosphorylated HERC2 promotes the association between RNF8 and UBE2N/UBC13 and favors the specific formation of 'Lys-63'-linked ubiquitin chains. Promotes non-homologous end joining (NHEJ) by promoting the 'Lys-48'-linked ubiquitination and degradation the of KU80/XRCC5. Following DNA damage, mediates the ubiquitination and degradation of JMJD2A/KDM4A in collaboration with RNF168, leading to unmask H4K20me2 mark and promote the recruitment of TP53BP1 at DNA damage sites. Following DNA damage, mediates the ubiquitination and degradation of POLD4/p12, a subunit of DNA polymerase delta. In the absence of POLD4, DNA polymerase delta complex exhibits higher proofreading activity. In addition to its function in damage signaling, also plays a role in higher-order chromatin structure by mediating extensive chromatin decondensation. Involved in the activation of ATM by promoting histone H2B ubiquitination, which indirectly triggers histone H4 'Lys-16' acetylation (H4K16ac), establishing a chromatin environment that promotes efficient activation of ATM kinase. Required in the testis, where it plays a role in the replacement of histones during spermatogenesis. At uncapped telomeres, promotes the joining of deprotected chromosome ends by inducing H2A ubiquitination and TP53BP1 recruitment, suggesting that it may enhance cancer development by aggravating telomere-induced genome instability in case of telomeric crisis. Promotes the assembly of RAD51 at DNA DSBs in the absence of BRCA1 and TP53BP1 Also involved in class switch recombination in immune system, via its role in regulation of DSBs repair. May be required for proper exit from mitosis after spindle checkpoint activation and may regulate cytokinesis. May play a role in the regulation of RXRA-mediated transcriptional activity. Not involved in RXRA ubiquitination by UBE2E2. This chain is E3 ubiquitin-protein ligase RNF8, found in Bos taurus (Bovine).